The primary structure comprises 464 residues: Probable mannosyltransferase KTR4 (464 aa).

At 1–11 (MRFLSKRILKP) the chain is on the cytoplasmic side. Residues 12 to 32 (VLSVIILISIAVTVVLYFLTA) form a helical; Signal-anchor for type II membrane protein membrane-spanning segment. Residues 33–130 (NENYLQAVKD…NLVRSGDPLA (98 aa)) form a stem region region. Residues 33–464 (NENYLQAVKD…SMSEEELEMY (432 aa)) lie on the Lumenal side of the membrane. Residues 131 to 464 (GKAKGTILSL…SMSEEELEMY (334 aa)) are catalytic. Glu352 functions as the Nucleophile in the catalytic mechanism.

Belongs to the glycosyltransferase 15 family.

Its subcellular location is the membrane. Functionally, possible glycosyltransferase that transfers an alpha-D-mannosyl residue from GDP-mannose into lipid-linked oligosaccharide, forming an alpha-(1-&gt;2)-D-mannosyl-D-mannose linkage. The sequence is that of Probable mannosyltransferase KTR4 (KTR4) from Saccharomyces cerevisiae (strain ATCC 204508 / S288c) (Baker's yeast).